The sequence spans 627 residues: Phosphomethylpyrimidine synthase (627 aa).

Residues 1 to 21 (MSAQQQKNLSESAQVDQQSVQ) show a composition bias toward polar residues. The segment at 1-32 (MSAQQQKNLSESAQVDQQSVQPFPRSQKVYVQ) is disordered. Substrate-binding positions include asparagine 231, methionine 260, tyrosine 289, histidine 325, 345–347 (SRG), 386–389 (DGLR), and glutamate 425. Zn(2+) is bound at residue histidine 429. A substrate-binding site is contributed by tyrosine 452. A Zn(2+)-binding site is contributed by histidine 493. Residues cysteine 573, cysteine 576, and cysteine 581 each coordinate [4Fe-4S] cluster.

The protein belongs to the ThiC family. Homodimer. It depends on [4Fe-4S] cluster as a cofactor.

The catalysed reaction is 5-amino-1-(5-phospho-beta-D-ribosyl)imidazole + S-adenosyl-L-methionine = 4-amino-2-methyl-5-(phosphooxymethyl)pyrimidine + CO + 5'-deoxyadenosine + formate + L-methionine + 3 H(+). The protein operates within cofactor biosynthesis; thiamine diphosphate biosynthesis. In terms of biological role, catalyzes the synthesis of the hydroxymethylpyrimidine phosphate (HMP-P) moiety of thiamine from aminoimidazole ribotide (AIR) in a radical S-adenosyl-L-methionine (SAM)-dependent reaction. In Ectopseudomonas mendocina (strain ymp) (Pseudomonas mendocina), this protein is Phosphomethylpyrimidine synthase.